We begin with the raw amino-acid sequence, 224 residues long: PKHD-type hydroxylase HNE_1625 (224 aa).

The Fe2OG dioxygenase domain occupies 77-175 (KFAPPLISCS…RFVFVGWIQS (99 aa)). Residues His95, Asp97, and His156 each coordinate Fe cation. 2-oxoglutarate is bound at residue Arg166.

Requires Fe(2+) as cofactor. The cofactor is L-ascorbate.

This chain is PKHD-type hydroxylase HNE_1625, found in Hyphomonas neptunium (strain ATCC 15444).